The primary structure comprises 227 residues: NADH-quinone oxidoreductase subunit C (227 aa).

It belongs to the complex I 30 kDa subunit family. As to quaternary structure, NDH-1 is composed of 14 different subunits. Subunits NuoB, C, D, E, F, and G constitute the peripheral sector of the complex.

Its subcellular location is the cell inner membrane. The enzyme catalyses a quinone + NADH + 5 H(+)(in) = a quinol + NAD(+) + 4 H(+)(out). Its function is as follows. NDH-1 shuttles electrons from NADH, via FMN and iron-sulfur (Fe-S) centers, to quinones in the respiratory chain. The immediate electron acceptor for the enzyme in this species is believed to be ubiquinone. Couples the redox reaction to proton translocation (for every two electrons transferred, four hydrogen ions are translocated across the cytoplasmic membrane), and thus conserves the redox energy in a proton gradient. The sequence is that of NADH-quinone oxidoreductase subunit C from Legionella pneumophila (strain Corby).